We begin with the raw amino-acid sequence, 978 residues long: Peroxisomal ATPase PEX6 (978 aa).

R119 carries the post-translational modification Omega-N-methylarginine. ATP-binding positions include 470–477 (GPPGSGKT) and 742–749 (GPPGTGKT).

It belongs to the AAA ATPase family. In terms of assembly, interacts with PEX1; forming the PEX1-PEX6 AAA ATPase complex, which is composed of a heterohexamer formed by a trimer of PEX1-PEX6 dimers. Interacts with PEX26; interaction is direct and promotes recruitment to peroxisomal membranes. Interacts with ZFAND6.

The protein resides in the cytoplasm. It localises to the cytosol. The protein localises to the peroxisome membrane. It is found in the cell projection. Its subcellular location is the cilium. The protein resides in the photoreceptor outer segment. It catalyses the reaction ATP + H2O = ADP + phosphate + H(+). Functionally, component of the PEX1-PEX6 AAA ATPase complex, a protein dislocase complex that mediates the ATP-dependent extraction of the PEX5 receptor from peroxisomal membranes, an essential step for PEX5 recycling. Specifically recognizes PEX5 monoubiquitinated at 'Cys-11', and pulls it out of the peroxisome lumen through the PEX2-PEX10-PEX12 retrotranslocation channel. Extraction by the PEX1-PEX6 AAA ATPase complex is accompanied by unfolding of the TPR repeats and release of bound cargo from PEX5. In Rattus norvegicus (Rat), this protein is Peroxisomal ATPase PEX6.